Here is a 477-residue protein sequence, read N- to C-terminus: Bifunctional protein HldE (477 aa).

The ribokinase stretch occupies residues methionine 1–threonine 318. At lysine 179 the chain carries N6-acetyllysine. Asparagine 195 to glutamate 198 is an ATP binding site. Aspartate 264 is an active-site residue. Residues methionine 344–glycine 477 form a cytidylyltransferase region.

In the N-terminal section; belongs to the carbohydrate kinase PfkB family. The protein in the C-terminal section; belongs to the cytidylyltransferase family. In terms of assembly, homodimer.

The enzyme catalyses D-glycero-beta-D-manno-heptose 7-phosphate + ATP = D-glycero-beta-D-manno-heptose 1,7-bisphosphate + ADP + H(+). The catalysed reaction is D-glycero-beta-D-manno-heptose 1-phosphate + ATP + H(+) = ADP-D-glycero-beta-D-manno-heptose + diphosphate. It functions in the pathway nucleotide-sugar biosynthesis; ADP-L-glycero-beta-D-manno-heptose biosynthesis; ADP-L-glycero-beta-D-manno-heptose from D-glycero-beta-D-manno-heptose 7-phosphate: step 1/4. The protein operates within nucleotide-sugar biosynthesis; ADP-L-glycero-beta-D-manno-heptose biosynthesis; ADP-L-glycero-beta-D-manno-heptose from D-glycero-beta-D-manno-heptose 7-phosphate: step 3/4. It participates in bacterial outer membrane biogenesis; LPS core biosynthesis. Its function is as follows. Catalyzes the phosphorylation of D-glycero-D-manno-heptose 7-phosphate at the C-1 position to selectively form D-glycero-beta-D-manno-heptose-1,7-bisphosphate. Catalyzes the ADP transfer from ATP to D-glycero-beta-D-manno-heptose 1-phosphate, yielding ADP-D-glycero-beta-D-manno-heptose. The protein is Bifunctional protein HldE of Shigella flexneri.